The chain runs to 185 residues: ATP synthase subunit b 2 (185 aa).

Residues 1-25 (MAESHGNAHGATAHTEADGGHKAPF) form a disordered region. The helical transmembrane segment at 34-56 (ASQLVSLTIAFVALYLISSRLAL) threads the bilayer.

This sequence belongs to the ATPase B chain family. In terms of assembly, F-type ATPases have 2 components, F(1) - the catalytic core - and F(0) - the membrane proton channel. F(1) has five subunits: alpha(3), beta(3), gamma(1), delta(1), epsilon(1). F(0) has three main subunits: a(1), b(2) and c(10-14). The alpha and beta chains form an alternating ring which encloses part of the gamma chain. F(1) is attached to F(0) by a central stalk formed by the gamma and epsilon chains, while a peripheral stalk is formed by the delta and b chains.

It localises to the cell inner membrane. F(1)F(0) ATP synthase produces ATP from ADP in the presence of a proton or sodium gradient. F-type ATPases consist of two structural domains, F(1) containing the extramembraneous catalytic core and F(0) containing the membrane proton channel, linked together by a central stalk and a peripheral stalk. During catalysis, ATP synthesis in the catalytic domain of F(1) is coupled via a rotary mechanism of the central stalk subunits to proton translocation. Functionally, component of the F(0) channel, it forms part of the peripheral stalk, linking F(1) to F(0). The b'-subunit is a diverged and duplicated form of b found in plants and photosynthetic bacteria. The protein is ATP synthase subunit b 2 (atpF2) of Nitrobacter winogradskyi (strain ATCC 25391 / DSM 10237 / CIP 104748 / NCIMB 11846 / Nb-255).